A 340-amino-acid polypeptide reads, in one-letter code: Arginine N-succinyltransferase subunit beta (340 aa).

The protein belongs to the succinylarginine dihydrolase family. As to quaternary structure, heterotetramer of two alpha and two beta subunits.

It carries out the reaction succinyl-CoA + L-arginine = N(2)-succinyl-L-arginine + CoA + H(+). It participates in amino-acid degradation; L-arginine degradation via AST pathway; L-glutamate and succinate from L-arginine: step 1/5. This is Arginine N-succinyltransferase subunit beta (aruG) from Pseudomonas aeruginosa (strain ATCC 15692 / DSM 22644 / CIP 104116 / JCM 14847 / LMG 12228 / 1C / PRS 101 / PAO1).